Consider the following 164-residue polypeptide: NADH-quinone oxidoreductase subunit I (164 aa).

2 consecutive 4Fe-4S ferredoxin-type domains span residues 55 to 84 (RRYE…IEID) and 95 to 124 (KVYD…MGPY). Cys64, Cys67, Cys70, Cys74, Cys104, Cys107, Cys110, and Cys114 together coordinate [4Fe-4S] cluster.

This sequence belongs to the complex I 23 kDa subunit family. As to quaternary structure, NDH-1 is composed of 14 different subunits. Subunits NuoA, H, J, K, L, M, N constitute the membrane sector of the complex. It depends on [4Fe-4S] cluster as a cofactor.

It localises to the cell inner membrane. The enzyme catalyses a quinone + NADH + 5 H(+)(in) = a quinol + NAD(+) + 4 H(+)(out). Its function is as follows. NDH-1 shuttles electrons from NADH, via FMN and iron-sulfur (Fe-S) centers, to quinones in the respiratory chain. The immediate electron acceptor for the enzyme in this species is believed to be ubiquinone. Couples the redox reaction to proton translocation (for every two electrons transferred, four hydrogen ions are translocated across the cytoplasmic membrane), and thus conserves the redox energy in a proton gradient. This Magnetococcus marinus (strain ATCC BAA-1437 / JCM 17883 / MC-1) protein is NADH-quinone oxidoreductase subunit I.